The chain runs to 349 residues: Probable sugar phosphate/phosphate translocator At5g25400 (349 aa).

10 helical membrane passes run 15–35, 49–69, 89–109, 113–133, 141–161, 165–185, 205–225, 236–256, 263–283, and 286–306; these read IIIS…VIVY, FPIS…FLLI, VVPI…AYIY, SFIQ…GVLF, ETMM…YGEA, VWGV…LVMI, VAPC…FPIL, LIFG…FLLV, TMNV…WSVI, and TVTP…AYYN. An EamA domain is found at 38-156; that stretch reads YILDKKMYDW…LSISFGVAIA (119 aa). The tract at residues 321–349 is disordered; it reads TAQQVDEETGRLLEEREGNEGGRKNEPED. A compositionally biased stretch (basic and acidic residues) spans 328 to 349; that stretch reads ETGRLLEEREGNEGGRKNEPED.

It belongs to the TPT transporter family. TPT (TC 2.A.7.9) subfamily.

Its subcellular location is the membrane. This is Probable sugar phosphate/phosphate translocator At5g25400 from Arabidopsis thaliana (Mouse-ear cress).